Consider the following 87-residue polypeptide: Small ribosomal subunit protein uS15c (87 aa).

This sequence belongs to the universal ribosomal protein uS15 family. Part of the 30S ribosomal subunit.

It localises to the plastid. It is found in the chloroplast. In Solanum tuberosum (Potato), this protein is Small ribosomal subunit protein uS15c (rps15).